The chain runs to 560 residues: Proline--tRNA ligase (560 aa).

Belongs to the class-II aminoacyl-tRNA synthetase family. ProS type 1 subfamily. Homodimer.

It localises to the cytoplasm. The enzyme catalyses tRNA(Pro) + L-proline + ATP = L-prolyl-tRNA(Pro) + AMP + diphosphate. Catalyzes the attachment of proline to tRNA(Pro) in a two-step reaction: proline is first activated by ATP to form Pro-AMP and then transferred to the acceptor end of tRNA(Pro). As ProRS can inadvertently accommodate and process non-cognate amino acids such as alanine and cysteine, to avoid such errors it has two additional distinct editing activities against alanine. One activity is designated as 'pretransfer' editing and involves the tRNA(Pro)-independent hydrolysis of activated Ala-AMP. The other activity is designated 'posttransfer' editing and involves deacylation of mischarged Ala-tRNA(Pro). The misacylated Cys-tRNA(Pro) is not edited by ProRS. The polypeptide is Proline--tRNA ligase (Vesicomyosocius okutanii subsp. Calyptogena okutanii (strain HA)).